Here is a 162-residue protein sequence, read N- to C-terminus: UPF0114 protein PFLU_5318 (162 aa).

3 helical membrane-spanning segments follow: residues 15 to 35, 53 to 73, and 136 to 156; these read LLAP…LKFF, LILV…LVMV, and LMWY…MGYL.

It belongs to the UPF0114 family.

It localises to the cell membrane. This is UPF0114 protein PFLU_5318 from Pseudomonas fluorescens (strain SBW25).